A 144-amino-acid chain; its full sequence is Large ribosomal subunit protein uL15 (144 aa).

The interval 1–57 (MQLNDLRSAPGARREKHRPGRGIGSGLGKTGGRGHKGLTSRSGGKVAPGFEGGQQPL) is disordered. Residues 21 to 31 (RGIGSGLGKTG) show a composition bias toward gly residues.

This sequence belongs to the universal ribosomal protein uL15 family. Part of the 50S ribosomal subunit.

Its function is as follows. Binds to the 23S rRNA. The protein is Large ribosomal subunit protein uL15 of Pseudomonas aeruginosa (strain LESB58).